We begin with the raw amino-acid sequence, 61 residues long: Large ribosomal subunit protein uL30 (61 aa).

The protein belongs to the universal ribosomal protein uL30 family. In terms of assembly, part of the 50S ribosomal subunit.

The polypeptide is Large ribosomal subunit protein uL30 (Frankia casuarinae (strain DSM 45818 / CECT 9043 / HFP020203 / CcI3)).